The primary structure comprises 317 residues: MARRRKGRPINGVILLDKPTGISSNDALQKVKRIYFAEKAGHTGALDPLATGMLPICLGEATKFSQFLLDSDKRYVVIAKLGERTNTSDSDGEVVETRDVNVTQEQLERCIASFKGETDQIPSMFSALKYQGKPLYEYARAGIEVPRESRKITVYSIELLRFEGDEVEMEVHCSKGTYIRTITDDLGEMLGCGAHVTMLRRTGVAKYPYDRMVTLEQLNEILEQAQAQEIAPKELLDPLLMPMDTAVEDLPEVNLNAELTDLVQHGMPVQVSGAPTEGTVRMTSGEEKLFVGVAQIAEDGRVAPKRLVVFRDEEPQA.

Catalysis depends on D47, which acts as the Nucleophile.

It belongs to the pseudouridine synthase TruB family. Type 1 subfamily.

It catalyses the reaction uridine(55) in tRNA = pseudouridine(55) in tRNA. Responsible for synthesis of pseudouridine from uracil-55 in the psi GC loop of transfer RNAs. This Vibrio atlanticus (strain LGP32) (Vibrio splendidus (strain Mel32)) protein is tRNA pseudouridine synthase B.